Consider the following 321-residue polypeptide: Mas-related G-protein coupled receptor member H (321 aa).

The Extracellular segment spans residues M1 to H35. Residue N23 is glycosylated (N-linked (GlcNAc...) asparagine). Residues T36 to I56 form a helical membrane-spanning segment. At W57–Y71 the chain is on the cytoplasmic side. The helical transmembrane segment at I72–V92 threads the bilayer. At N93–L102 the chain is on the extracellular side. Residue N99 is glycosylated (N-linked (GlcNAc...) asparagine). A helical membrane pass occupies residues E103–V126. Residues E127 to S147 lie on the Cytoplasmic side of the membrane. The chain crosses the membrane as a helical span at residues A148–F168. At C169–C188 the chain is on the extracellular side. Residues I189–Q209 traverse the membrane as a helical segment. Topologically, residues V210–I225 are cytoplasmic. A helical transmembrane segment spans residues I226 to I246. Position 247 (G247) is a topological domain, extracellular. A helical membrane pass occupies residues Y248 to N271. The Cytoplasmic portion of the chain corresponds to C272–P320.

It belongs to the G-protein coupled receptor 1 family. Mas subfamily.

It is found in the cell membrane. Its function is as follows. Orphan receptor. May regulate nociceptor function and/or development, including the sensation or modulation of pain. The sequence is that of Mas-related G-protein coupled receptor member H (Mrgprh) from Mus musculus (Mouse).